Reading from the N-terminus, the 220-residue chain is MAEQPAGQAGTTDNRDARGDREGRRRDSGRGSRERDGEKSNYLERVVAINRVSKVVKGGRRFSFTALVIVGDGNGMVGVGYGKAKEVPAAIAKGVEEARKSFFRVPLIGGTITHPVQGEAAAGVVLLRPASPGTGVIAGGAARAVLECAGVHDILAKSLGSDNAINVVHATVAALKLLQRPEEVAARRGLPIEDVAPAGMLKARRKSEALAASVLPDRTI.

The disordered stretch occupies residues 1 to 39 (MAEQPAGQAGTTDNRDARGDREGRRRDSGRGSRERDGEK). The span at 13 to 39 (DNRDARGDREGRRRDSGRGSRERDGEK) shows a compositional bias: basic and acidic residues. In terms of domain architecture, S5 DRBM spans 42–105 (YLERVVAINR…EEARKSFFRV (64 aa)).

Belongs to the universal ribosomal protein uS5 family. In terms of assembly, part of the 30S ribosomal subunit. Contacts proteins S4 and S8.

In terms of biological role, with S4 and S12 plays an important role in translational accuracy. Located at the back of the 30S subunit body where it stabilizes the conformation of the head with respect to the body. This is Small ribosomal subunit protein uS5 from Mycobacterium bovis (strain ATCC BAA-935 / AF2122/97).